The sequence spans 128 residues: Probable 4-amino-4-deoxy-L-arabinose-phosphoundecaprenol flippase subunit ArnF (128 aa).

Residues 1–2 (MG) are Cytoplasmic-facing. A helical membrane pass occupies residues 3–23 (LMWGLFSVIIASAAQLSLGFA). At 24–35 (ASHLPPMTHLWD) the chain is on the periplasmic side. The helical transmembrane segment at 36-56 (FIAALLAFGLDARILLLGLLG) threads the bilayer. Over 57-76 (YLLSVFCWYKTLHKLALSKA) the chain is Cytoplasmic. Residues 77 to 97 (YALLSMSYVLVWIASMILPGW) form a helical membrane-spanning segment. Over 98-100 (EGT) the chain is Periplasmic. The chain crosses the membrane as a helical span at residues 101–121 (FSLKALLGVACIMSGLMLIFL). The Cytoplasmic segment spans residues 122–128 (PTTKQRY).

It belongs to the ArnF family. As to quaternary structure, heterodimer of ArnE and ArnF.

It localises to the cell inner membrane. The protein operates within bacterial outer membrane biogenesis; lipopolysaccharide biosynthesis. Functionally, translocates 4-amino-4-deoxy-L-arabinose-phosphoundecaprenol (alpha-L-Ara4N-phosphoundecaprenol) from the cytoplasmic to the periplasmic side of the inner membrane. This Escherichia coli O17:K52:H18 (strain UMN026 / ExPEC) protein is Probable 4-amino-4-deoxy-L-arabinose-phosphoundecaprenol flippase subunit ArnF.